Reading from the N-terminus, the 91-residue chain is Cell division protein FtsB (91 aa).

At 1-3 (MRW) the chain is on the cytoplasmic side. A helical membrane pass occupies residues 4–21 (PLIVLAVLVIVLQYPLWL). Residues 22–91 (GKGGWLRVWD…EIFVHTPRKP (70 aa)) are Periplasmic-facing. A coiled-coil region spans residues 28–74 (RVWDVDRQLQAQRETNQRLEQRNAGLEAEVRDLKSGNEAVEERARFE).

Belongs to the FtsB family. As to quaternary structure, part of a complex composed of FtsB, FtsL and FtsQ.

It is found in the cell inner membrane. Its function is as follows. Essential cell division protein. May link together the upstream cell division proteins, which are predominantly cytoplasmic, with the downstream cell division proteins, which are predominantly periplasmic. In Aromatoleum aromaticum (strain DSM 19018 / LMG 30748 / EbN1) (Azoarcus sp. (strain EbN1)), this protein is Cell division protein FtsB.